The sequence spans 615 residues: Chromosomal replication initiator protein DnaA (615 aa).

The domain I, interacts with DnaA modulators stretch occupies residues 1–88; the sequence is MSEGQINLAM…RVAVTVDPSA (88 aa). The segment at 85 to 272 is disordered; sequence DPSAVPPSAP…PTSGGPDQLN (188 aa). The segment at 88–269 is domain II; the sequence is AVPPSAPTEE…STNPTSGGPD (182 aa). Low complexity-rich tracts occupy residues 94–112 and 173–190; these read PTEE…PAPD and PSSA…VAES. A domain III, AAA+ region region spans residues 270–486; the sequence is QLNPKYTFDT…GALIRVTAFA (217 aa). Residues glycine 314, glycine 316, lysine 317, and threonine 318 each coordinate ATP. Positions 487-615 are domain IV, binds dsDNA; that stretch reads SLNRQSVDLH…QQAHHNHHHL (129 aa).

This sequence belongs to the DnaA family. As to quaternary structure, oligomerizes as a right-handed, spiral filament on DNA at oriC.

Its subcellular location is the cytoplasm. In terms of biological role, plays an essential role in the initiation and regulation of chromosomal replication. ATP-DnaA binds to the origin of replication (oriC) to initiate formation of the DNA replication initiation complex once per cell cycle. Binds the DnaA box (a 9 base pair repeat at the origin) and separates the double-stranded (ds)DNA. Forms a right-handed helical filament on oriC DNA; dsDNA binds to the exterior of the filament while single-stranded (ss)DNA is stabiized in the filament's interior. The ATP-DnaA-oriC complex binds and stabilizes one strand of the AT-rich DNA unwinding element (DUE), permitting loading of DNA polymerase. After initiation quickly degrades to an ADP-DnaA complex that is not apt for DNA replication. Binds acidic phospholipids. This is Chromosomal replication initiator protein DnaA from Thermobifida fusca (strain YX).